The chain runs to 588 residues: L-fucose isomerase (588 aa).

Active-site proton acceptor residues include Glu-335 and Asp-359. Mn(2+) contacts are provided by Glu-335, Asp-359, and His-525.

This sequence belongs to the L-fucose isomerase family. Mn(2+) is required as a cofactor.

It localises to the cytoplasm. The enzyme catalyses L-fucose = L-fuculose. It functions in the pathway carbohydrate degradation; L-fucose degradation; L-lactaldehyde and glycerone phosphate from L-fucose: step 1/3. Converts the aldose L-fucose into the corresponding ketose L-fuculose. The chain is L-fucose isomerase from Streptococcus pneumoniae (strain JJA).